Consider the following 477-residue polypeptide: UDP-N-acetylmuramate--L-alanine ligase (477 aa).

112–118 (GTHGKTT) contacts ATP.

The protein belongs to the MurCDEF family.

It localises to the cytoplasm. It carries out the reaction UDP-N-acetyl-alpha-D-muramate + L-alanine + ATP = UDP-N-acetyl-alpha-D-muramoyl-L-alanine + ADP + phosphate + H(+). It participates in cell wall biogenesis; peptidoglycan biosynthesis. Functionally, cell wall formation. This is UDP-N-acetylmuramate--L-alanine ligase from Cupriavidus necator (strain ATCC 17699 / DSM 428 / KCTC 22496 / NCIMB 10442 / H16 / Stanier 337) (Ralstonia eutropha).